Reading from the N-terminus, the 201-residue chain is 3-isopropylmalate dehydratase small subunit (201 aa).

It belongs to the LeuD family. LeuD type 1 subfamily. In terms of assembly, heterodimer of LeuC and LeuD.

The catalysed reaction is (2R,3S)-3-isopropylmalate = (2S)-2-isopropylmalate. Its pathway is amino-acid biosynthesis; L-leucine biosynthesis; L-leucine from 3-methyl-2-oxobutanoate: step 2/4. Catalyzes the isomerization between 2-isopropylmalate and 3-isopropylmalate, via the formation of 2-isopropylmaleate. This is 3-isopropylmalate dehydratase small subunit from Kineococcus radiotolerans (strain ATCC BAA-149 / DSM 14245 / SRS30216).